The primary structure comprises 1240 residues: ABC transporter B family member 15 (1240 aa).

The next 6 helical transmembrane spans lie at 35 to 55 (MGLG…VLLI), 82 to 102 (VALL…GYCW), 158 to 180 (LPNF…ILLW), 184 to 206 (IVGL…ALIS), 264 to 284 (GITI…SWYG), and 296 to 316 (GTVF…GGGL). The 290-residue stretch at 35-324 (MGLGLIGAVG…GLSNLKYFFE (290 aa)) folds into the ABC transmembrane type-1 1 domain. The ABC transporter 1 domain maps to 359–595 (VEFKNVKFVY…IDGQYSTLVH (237 aa)). Position 394-401 (394-401 (GGSGSGKS)) interacts with ATP. Residues Asn542, Asn605, and Asn622 are each glycosylated (N-linked (GlcNAc...) asparagine). The tract at residues 617–646 (SKDIRNSSRVSTLSRSSSANSVTGPSTIKN) is disordered. Low complexity predominate over residues 623 to 639 (SSRVSTLSRSSSANSVT). N-linked (GlcNAc...) asparagine glycosylation is present at Asn646. Residues 672–960 (ALYGCISATL…AGSMTTDLAK (289 aa)) enclose the ABC transmembrane type-1 2 domain. The next 2 helical transmembrane spans lie at 681 to 701 (LFGA…SVYF) and 714 to 734 (IYAL…ISQH). An N-linked (GlcNAc...) asparagine glycan is attached at Asn769. 4 consecutive transmembrane segments (helical) span residues 794–813 (ALVV…GLVI), 817–839 (LALV…RVLL), 895–915 (SWFA…TWAL), and 923–943 (LIQD…ILVS). Residues 995–1233 (VEFLDVDFSY…GPTGIYFSLV (239 aa)) enclose the ABC transporter 2 domain. An N-linked (GlcNAc...) asparagine glycan is attached at Asn1015. 1030-1037 (GPSGSGKS) provides a ligand contact to ATP.

The protein belongs to the ABC transporter superfamily. ABCB family. Multidrug resistance exporter (TC 3.A.1.201) subfamily.

The protein localises to the membrane. The chain is ABC transporter B family member 15 (ABCB15) from Arabidopsis thaliana (Mouse-ear cress).